We begin with the raw amino-acid sequence, 295 residues long: Elongation factor Ts (295 aa).

An involved in Mg(2+) ion dislocation from EF-Tu region spans residues 79–82 (TDFV).

This sequence belongs to the EF-Ts family.

It localises to the cytoplasm. Associates with the EF-Tu.GDP complex and induces the exchange of GDP to GTP. It remains bound to the aminoacyl-tRNA.EF-Tu.GTP complex up to the GTP hydrolysis stage on the ribosome. The polypeptide is Elongation factor Ts (Bacillus anthracis (strain A0248)).